Consider the following 359-residue polypeptide: Mannonate dehydratase (359 aa).

Belongs to the mannonate dehydratase family. The cofactor is Fe(2+). Mn(2+) is required as a cofactor.

The enzyme catalyses D-mannonate = 2-dehydro-3-deoxy-D-gluconate + H2O. The protein operates within carbohydrate metabolism; pentose and glucuronate interconversion. In terms of biological role, catalyzes the dehydration of D-mannonate. The sequence is that of Mannonate dehydratase from Moorella thermoacetica (strain ATCC 39073 / JCM 9320).